Here is a 377-residue protein sequence, read N- to C-terminus: Succinyl-diaminopimelate desuccinylase (377 aa).

Residue histidine 67 coordinates Zn(2+). Aspartate 69 is a catalytic residue. Aspartate 100 contributes to the Zn(2+) binding site. The active-site Proton acceptor is glutamate 134. Residues glutamate 135, glutamate 163, and histidine 349 each contribute to the Zn(2+) site.

This sequence belongs to the peptidase M20A family. DapE subfamily. Homodimer. Zn(2+) is required as a cofactor. Requires Co(2+) as cofactor.

It catalyses the reaction N-succinyl-(2S,6S)-2,6-diaminopimelate + H2O = (2S,6S)-2,6-diaminopimelate + succinate. It functions in the pathway amino-acid biosynthesis; L-lysine biosynthesis via DAP pathway; LL-2,6-diaminopimelate from (S)-tetrahydrodipicolinate (succinylase route): step 3/3. Catalyzes the hydrolysis of N-succinyl-L,L-diaminopimelic acid (SDAP), forming succinate and LL-2,6-diaminopimelate (DAP), an intermediate involved in the bacterial biosynthesis of lysine and meso-diaminopimelic acid, an essential component of bacterial cell walls. The chain is Succinyl-diaminopimelate desuccinylase from Haemophilus influenzae (strain PittGG).